We begin with the raw amino-acid sequence, 440 residues long: Xylose isomerase (440 aa).

Residues His101 and Asp104 contribute to the active site. Residues Glu232, Glu268, His271, Asp296, Asp307, Asp309, and Asp339 each coordinate Mg(2+).

This sequence belongs to the xylose isomerase family. In terms of assembly, homotetramer. Requires Mg(2+) as cofactor.

It is found in the cytoplasm. The catalysed reaction is alpha-D-xylose = alpha-D-xylulofuranose. This Salmonella dublin (strain CT_02021853) protein is Xylose isomerase.